A 608-amino-acid chain; its full sequence is ATP-citrate synthase beta chain protein 1 (608 aa).

ATP contacts are provided by residues 214 to 234 and 265 to 291; these read ILRFNNIPQVKMMVVLGELGG and FKSEVQFGHAGAKSGGELESAQAKNQA. Glutamate 231 provides a ligand contact to Mg(2+). The Tele-phosphohistidine intermediate role is filled by histidine 273. 292-302 is a CoA binding site; it reads LKDAGAVVPTS.

This sequence belongs to the succinate/malate CoA ligase alpha subunit family. In terms of assembly, heterooctamer of 4 alpha and 4 beta chains.

It is found in the cytoplasm. It localises to the cytosol. It catalyses the reaction oxaloacetate + acetyl-CoA + ADP + phosphate = citrate + ATP + CoA. Its function is as follows. ATP citrate-lyase is the primary enzyme responsible for the synthesis of cytosolic acetyl-CoA, used for the elongation of fatty acids and biosynthesis of isoprenoids, flavonoids and malonated derivatives. May supply substrate to the cytosolic acetyl-CoA carboxylase, which generates the malonyl-CoA used for the synthesis of a multitude of compounds, including very long chain fatty acids and flavonoids. In contrast to all known animal ACL enzymes having a homomeric structure, plant ACLs are composed of alpha and beta chains. In Oryza sativa subsp. japonica (Rice), this protein is ATP-citrate synthase beta chain protein 1 (ACLB-1).